The sequence spans 258 residues: Mitochondrial distribution and morphology protein 12 (258 aa).

The 233-residue stretch at 1–233 folds into the SMP-LTD domain; that stretch reads MSFDIHWSNL…WPSWIELDFN (233 aa). Residues 238–258 form a disordered region; the sequence is EDLQQSKDTPTTANTGTTTTN. Residues 246 to 258 are compositionally biased toward low complexity; the sequence is TPTTANTGTTTTN.

The protein belongs to the MDM12 family. In terms of assembly, component of the ER-mitochondria encounter structure (ERMES) or MDM complex, composed of MMM1, MDM10, MDM12 and MDM34. An MMM1 homodimer associates with one molecule of MDM12 on each side in a pairwise head-to-tail manner, and the SMP-LTD domains of MMM1 and MDM12 generate a continuous hydrophobic tunnel for phospholipid trafficking.

The protein resides in the mitochondrion outer membrane. It localises to the endoplasmic reticulum membrane. Component of the ERMES/MDM complex, which serves as a molecular tether to connect the endoplasmic reticulum (ER) and mitochondria. Components of this complex are involved in the control of mitochondrial shape and protein biogenesis, and function in nonvesicular lipid trafficking between the ER and mitochondria. MDM12 is required for the interaction of the ER-resident membrane protein MMM1 and the outer mitochondrial membrane-resident beta-barrel protein MDM10. The MDM12-MMM1 subcomplex functions in the major beta-barrel assembly pathway that is responsible for biogenesis of all mitochondrial outer membrane beta-barrel proteins, and acts in a late step after the SAM complex. The MDM10-MDM12-MMM1 subcomplex further acts in the TOM40-specific pathway after the action of the MDM12-MMM1 complex. Essential for establishing and maintaining the structure of mitochondria and maintenance of mtDNA nucleoids. The sequence is that of Mitochondrial distribution and morphology protein 12 from Zygosaccharomyces rouxii (strain ATCC 2623 / CBS 732 / NBRC 1130 / NCYC 568 / NRRL Y-229).